The sequence spans 715 residues: Polyribonucleotide nucleotidyltransferase (715 aa).

Asp487 and Asp493 together coordinate Mg(2+). A KH domain is found at 554–613; that stretch reads PRLYTFKINPEKIRDVIGKGGAVIRALTEETGTTIDIQDDGTITIAATSGEAAAAARSRI. In terms of domain architecture, S1 motif spans 623–691; sequence GKIYEGTVLK…DRGRVKLSMK (69 aa).

It belongs to the polyribonucleotide nucleotidyltransferase family. Mg(2+) is required as a cofactor.

Its subcellular location is the cytoplasm. It carries out the reaction RNA(n+1) + phosphate = RNA(n) + a ribonucleoside 5'-diphosphate. Functionally, involved in mRNA degradation. Catalyzes the phosphorolysis of single-stranded polyribonucleotides processively in the 3'- to 5'-direction. This chain is Polyribonucleotide nucleotidyltransferase, found in Dechloromonas aromatica (strain RCB).